Here is a 951-residue protein sequence, read N- to C-terminus: 2-oxoglutarate dehydrogenase E1 component (951 aa).

The interval Arg906 to Ala925 is disordered.

It belongs to the alpha-ketoglutarate dehydrogenase family. In terms of assembly, homodimer. Part of the 2-oxoglutarate dehydrogenase (OGDH) complex composed of E1 (2-oxoglutarate dehydrogenase), E2 (dihydrolipoamide succinyltransferase) and E3 (dihydrolipoamide dehydrogenase); the complex contains multiple copies of the three enzymatic components (E1, E2 and E3). Thiamine diphosphate serves as cofactor.

It catalyses the reaction N(6)-[(R)-lipoyl]-L-lysyl-[protein] + 2-oxoglutarate + H(+) = N(6)-[(R)-S(8)-succinyldihydrolipoyl]-L-lysyl-[protein] + CO2. In terms of biological role, E1 component of the 2-oxoglutarate dehydrogenase (OGDH) complex which catalyzes the decarboxylation of 2-oxoglutarate, the first step in the conversion of 2-oxoglutarate to succinyl-CoA and CO(2). In Exiguobacterium sp. (strain ATCC BAA-1283 / AT1b), this protein is 2-oxoglutarate dehydrogenase E1 component.